Here is a 105-residue protein sequence, read N- to C-terminus: Prokineticin-1 (105 aa).

Positions 1 to 19 (MRGAVHIFIMLLLATASDC) are cleaved as a signal peptide. Disulfide bonds link Cys-26/Cys-38, Cys-32/Cys-50, Cys-37/Cys-78, Cys-60/Cys-86, and Cys-80/Cys-96.

Belongs to the AVIT (prokineticin) family. Highly expressed in liver and ovary and weakly expressed in testis and placenta. Expressed in mucosa and mesenchyme of embryonic gut during enteric nervous system development (at protein level). Predominantly expressed in kidney and liver. Also expressed in lung, ovary, placenta and testis. In fetal liver, is restricted to and highly expressed in hepatocytes. In adult kidney, expression is restricted to the endothelial tubule cells. In placenta, expressed throughout gestation.

The protein resides in the secreted. Potently contracts gastrointestinal (GI) smooth muscle. Induces proliferation, migration and fenestration (the formation of membrane discontinuities) in capillary endothelial cells. Induces proliferation and differentiation, but not migration, of enteric neural crest cells. Directly influences neuroblastoma progression by promoting the proliferation and migration of neuroblastoma cells. Positively regulates PTGS2 expression and prostaglandin synthesis. May play a role in placentation. May play a role in normal and pathological testis angiogenesis. This Mus musculus (Mouse) protein is Prokineticin-1.